A 210-amino-acid chain; its full sequence is Thymidylate kinase (210 aa).

11–18 (GLEGAGKS) contributes to the ATP binding site.

The protein belongs to the thymidylate kinase family.

The catalysed reaction is dTMP + ATP = dTDP + ADP. In terms of biological role, phosphorylation of dTMP to form dTDP in both de novo and salvage pathways of dTTP synthesis. The protein is Thymidylate kinase of Vibrio parahaemolyticus serotype O3:K6 (strain RIMD 2210633).